The sequence spans 314 residues: MIOREX complex component 8 (314 aa).

Residues 132-312 form the EngB-type G domain; it reads TLPEVIFLGG…RYVIFQSCGL (181 aa). GTP-binding positions include 140–147, 173–177, 191–194, 253–256, and 290–292; these read GGTNVGKS, GFTKT, DSPG, TKMD, and SST. S147 and T175 together coordinate Mg(2+).

The protein belongs to the TRAFAC class TrmE-Era-EngA-EngB-Septin-like GTPase superfamily. EngB GTPase family. In terms of assembly, associates with the mitochondrial ribosome. Mg(2+) serves as cofactor. Sumoylated upon ethanol stress.

It is found in the mitochondrion. Functionally, component of MIOREX complexes, large expressome-like assemblies of ribosomes with factors involved in all the steps of post-transcriptional gene expression. The sequence is that of MIOREX complex component 8 from Saccharomyces cerevisiae (strain ATCC 204508 / S288c) (Baker's yeast).